The primary structure comprises 256 residues: Homeobox-leucine zipper protein HOX18 (256 aa).

The interval 52–117 is disordered; the sequence is YDHGRDEEQA…GGGGGTRKKL (66 aa). Positions 102–112 are enriched in gly residues; the sequence is DGGSGSGGGGG. A DNA-binding region (homeobox) is located at residues 112–171; that stretch reads GTRKKLQLTKEQSTLLEDSFRVHNILSHAQKHELARQLKLKPRQVEVWFQNRRARTKLKQ. The tract at residues 170–214 is leucine-zipper; the sequence is KQTEVDCEFLKRCCESLTEENKQLKHELMELRRLASAAAAAAGSQ.

This sequence belongs to the HD-ZIP homeobox family. Class II subfamily. As to expression, expressed in roots, leaf sheaths and blades and panicles.

Its subcellular location is the nucleus. Probable transcription factor. In Oryza sativa subsp. indica (Rice), this protein is Homeobox-leucine zipper protein HOX18 (HOX18).